The chain runs to 323 residues: Cysteine synthase A (323 aa).

Asn8 and Arg35 together coordinate hydrogen sulfide. Residue Lys42 is modified to N6-(pyridoxal phosphate)lysine. Pyridoxal 5'-phosphate-binding positions include Asn72 and 177-181; that span reads GTGGT. Leu269 provides a ligand contact to hydrogen sulfide. Ser273 provides a ligand contact to pyridoxal 5'-phosphate.

It belongs to the cysteine synthase/cystathionine beta-synthase family. Homodimer. Pyridoxal 5'-phosphate is required as a cofactor.

It carries out the reaction O-acetyl-L-serine + hydrogen sulfide = L-cysteine + acetate. It participates in amino-acid biosynthesis; L-cysteine biosynthesis; L-cysteine from L-serine: step 2/2. The polypeptide is Cysteine synthase A (cysK) (Escherichia coli O157:H7).